Consider the following 195-residue polypeptide: Dephospho-CoA kinase (195 aa).

One can recognise a DPCK domain in the interval 4–195; sequence IIGLTGGIAS…EQILDALQRL (192 aa). Position 12 to 17 (12 to 17) interacts with ATP; sequence ASGKST.

Belongs to the CoaE family.

It is found in the cytoplasm. The catalysed reaction is 3'-dephospho-CoA + ATP = ADP + CoA + H(+). It functions in the pathway cofactor biosynthesis; coenzyme A biosynthesis; CoA from (R)-pantothenate: step 5/5. In terms of biological role, catalyzes the phosphorylation of the 3'-hydroxyl group of dephosphocoenzyme A to form coenzyme A. The polypeptide is Dephospho-CoA kinase (Streptococcus agalactiae serotype III (strain NEM316)).